We begin with the raw amino-acid sequence, 155 residues long: Nuclear cap-binding protein subunit 2 (155 aa).

MRNA-binding positions include tyrosine 19, tyrosine 42, 111–115, 122–126, and 132–133; these read RTDWD, RQYGR, and QV. One can recognise an RRM domain in the interval 39–117; sequence NTLYVGNLSF…RIIRTDWDAG (79 aa). Positions 122–155 are disordered; it reads RQYGRGKSGGQVRDEYRQDYDPARGGYGKVVARP. Basic and acidic residues predominate over residues 133–143; it reads VRDEYRQDYDP.

It belongs to the RRM NCBP2 family. As to quaternary structure, component of the nuclear cap-binding complex (CBC), a heterodimer composed of ncbp1/cbp80 and ncbp2/cbp20 that interacts with m7GpppG-capped RNA.

The protein localises to the nucleus. Its subcellular location is the cytoplasm. Functionally, component of the cap-binding complex (CBC), which binds co-transcriptionally to the 5' cap of pre-mRNAs and is involved in various processes such as pre-mRNA splicing, translation regulation, nonsense-mediated mRNA decay, RNA-mediated gene silencing (RNAi) by microRNAs (miRNAs) and mRNA export. The CBC complex is involved in mRNA export from the nucleus, leading to the recruitment of the mRNA export machinery to the 5' end of mRNA and to mRNA export in a 5' to 3' direction through the nuclear pore. The CBC complex is also involved in mediating U snRNA and intronless mRNAs export from the nucleus. The CBC complex is essential for a pioneer round of mRNA translation, before steady state translation when the CBC complex is replaced by cytoplasmic cap-binding protein eIF4E. The pioneer round of mRNA translation mediated by the CBC complex plays a central role in nonsense-mediated mRNA decay (NMD), NMD only taking place in mRNAs bound to the CBC complex, but not on eIF4E-bound mRNAs. The CBC complex enhances NMD in mRNAs containing at least one exon-junction complex (EJC), promoting the interaction between upf1 and upf2. The CBC complex is also involved in 'failsafe' NMD, which is independent of the EJC complex, while it does not participate in Staufen-mediated mRNA decay (SMD). During cell proliferation, the CBC complex is also involved in microRNAs (miRNAs) biogenesis via its interaction with srrt/ars2, thereby being required for miRNA-mediated RNA interference. The CBC complex also acts as a negative regulator of parn, thereby acting as an inhibitor of mRNA deadenylation. In the CBC complex, ncbp2/cbp20 recognizes and binds capped RNAs (m7GpppG-capped RNA) but requires ncbp1/cbp80 to stabilize the movement of its N-terminal loop and lock the CBC into a high affinity cap-binding state with the cap structure. The conventional cap-binding complex with NCBP2 binds both small nuclear RNA (snRNA) and messenger (mRNA) and is involved in their export from the nucleus. The protein is Nuclear cap-binding protein subunit 2 (ncbp2) of Esox lucius (Northern pike).